The primary structure comprises 76 residues: Small ribosomal subunit protein bS18 (76 aa).

Belongs to the bacterial ribosomal protein bS18 family. In terms of assembly, part of the 30S ribosomal subunit. Forms a tight heterodimer with protein bS6.

Functionally, binds as a heterodimer with protein bS6 to the central domain of the 16S rRNA, where it helps stabilize the platform of the 30S subunit. This is Small ribosomal subunit protein bS18 from Stutzerimonas stutzeri (strain A1501) (Pseudomonas stutzeri).